A 244-amino-acid chain; its full sequence is DNA repair protein RecO (244 aa).

Belongs to the RecO family.

Functionally, involved in DNA repair and RecF pathway recombination. This Myxococcus xanthus (strain DK1622) protein is DNA repair protein RecO.